The primary structure comprises 116 residues: Large ribosomal subunit protein bL17 (116 aa).

The protein belongs to the bacterial ribosomal protein bL17 family. As to quaternary structure, part of the 50S ribosomal subunit. Contacts protein L32.

This is Large ribosomal subunit protein bL17 from Crocosphaera subtropica (strain ATCC 51142 / BH68) (Cyanothece sp. (strain ATCC 51142)).